The chain runs to 381 residues: MKENELKNEKSVDVLSVKQLESQKTVLPQDLFRSSFTWFCYEIYKSLVFRIWMLLWLPLSVWWKLSNNWIYPLMVSLLVLFWGPVFVLVIFRLSRKRSLSKQLTQFCKEITKNTPSSDPHDWEVVAANLNSYFYENKAWNTKYFFFSAMSCQEAFRTTLLEPFSLKKDEAAKVKSFKDSVPYIEEALEVYFTEVEKQWKLFNSEKSWSPVGLEDAKLPKEAYRFKLTWVLKRIFNRRCLPLFLFYLHNVFISRNDGTIARPLFLVVLFFIMTRDFRNMRMIVLSVKMEHKMQFLSTIINEQESGANGWDEIAKKMNRYLFEKKVWKNEEFFFDGIDCEWFFSHFFYRVLSAKKSMRALSLNVELWPYIKEAQLSCSEESLA.

Residues 1–42 (MKENELKNEKSVDVLSVKQLESQKTVLPQDLFRSSFTWFCYE) are Cytoplasmic-facing. The chain crosses the membrane as a helical span at residues 43–63 (IYKSLVFRIWMLLWLPLSVWW). Over 64–69 (KLSNNW) the chain is Extracellular. Residues 70 to 90 (IYPLMVSLLVLFWGPVFVLVI) traverse the membrane as a helical segment. Residues 91–381 (FRLSRKRSLS…QLSCSEESLA (291 aa)) are Cytoplasmic-facing.

This sequence belongs to the DUP/COS family.

The protein resides in the membrane. This is Protein COS6 (COS6) from Saccharomyces cerevisiae (strain ATCC 204508 / S288c) (Baker's yeast).